We begin with the raw amino-acid sequence, 458 residues long: MLKDPFQRLNLDREVLTVSQLNGRARLLLEDVFAQVWVEGEISNLARPASGHVYFTLKDRNAQVRCALFRQNAARVRQALRDGLAVRVRGKVSLFEGRGDYQLILDMLEPAGDGALRLAFEALKEKLAAEGLFSAERKAALPAHPRRIGIVSSPTGAVIRDIISVFRRRAPQVELTLIPTAVQGREATGQIVRALQLADAQGFDALILARGGGSLEDLWCFNEEAVARAVDACVTPIVCAVGHETDVSIADFVADVRAPTPSAAAELLAPSSADLQQRLNGLQQRLVLRMRDRLHRDAMRLDGLTRRLRHPGERLQQQAQRIDDLEQRLLRALDRRLCSGQERLARLETRLAAQHPGRTLNLLRQRLDHLSSRLPRAMQANIKGRRQQLQGLAQTLNVVSPLATLSRGYSILLDDRGQAIRSASQTQPGQRLKARLGDGELDVRVEDNHLQPVTLPLL.

The protein belongs to the XseA family. Heterooligomer composed of large and small subunits.

It localises to the cytoplasm. The catalysed reaction is Exonucleolytic cleavage in either 5'- to 3'- or 3'- to 5'-direction to yield nucleoside 5'-phosphates.. In terms of biological role, bidirectionally degrades single-stranded DNA into large acid-insoluble oligonucleotides, which are then degraded further into small acid-soluble oligonucleotides. The sequence is that of Exodeoxyribonuclease 7 large subunit from Stutzerimonas stutzeri (strain A1501) (Pseudomonas stutzeri).